The following is a 347-amino-acid chain: Beta-hexosaminidase (347 aa).

Substrate is bound by residues Asp62, Arg70, Arg134, and 164–165 (KH). The active-site Proton donor/acceptor is His177. Asp249 (nucleophile) is an active-site residue.

The protein belongs to the glycosyl hydrolase 3 family. NagZ subfamily.

It is found in the cytoplasm. The catalysed reaction is Hydrolysis of terminal non-reducing N-acetyl-D-hexosamine residues in N-acetyl-beta-D-hexosaminides.. The protein operates within cell wall biogenesis; peptidoglycan recycling. Functionally, plays a role in peptidoglycan recycling by cleaving the terminal beta-1,4-linked N-acetylglucosamine (GlcNAc) from peptide-linked peptidoglycan fragments, giving rise to free GlcNAc, anhydro-N-acetylmuramic acid and anhydro-N-acetylmuramic acid-linked peptides. This Mannheimia succiniciproducens (strain KCTC 0769BP / MBEL55E) protein is Beta-hexosaminidase.